We begin with the raw amino-acid sequence, 394 residues long: S-adenosylmethionine synthase 2 (394 aa).

A Mg(2+)-binding site is contributed by Glu-11. His-17 contributes to the ATP binding site. Glu-45 is a binding site for K(+). 2 residues coordinate L-methionine: Glu-58 and Gln-101. ATP contacts are provided by residues 169–171 (DGK), 237–240 (SGRF), Asp-248, 254–255 (RK), Ala-271, Lys-275, and Lys-279. Residue Asp-248 coordinates L-methionine. Lys-279 contributes to the L-methionine binding site.

The protein belongs to the AdoMet synthase family. In terms of assembly, homotetramer. Mn(2+) serves as cofactor. It depends on Mg(2+) as a cofactor. Requires Co(2+) as cofactor. K(+) is required as a cofactor.

The protein localises to the cytoplasm. The enzyme catalyses L-methionine + ATP + H2O = S-adenosyl-L-methionine + phosphate + diphosphate. It participates in amino-acid biosynthesis; S-adenosyl-L-methionine biosynthesis; S-adenosyl-L-methionine from L-methionine: step 1/1. Catalyzes the formation of S-adenosylmethionine from methionine and ATP. The reaction comprises two steps that are both catalyzed by the same enzyme: formation of S-adenosylmethionine (AdoMet) and triphosphate, and subsequent hydrolysis of the triphosphate. The protein is S-adenosylmethionine synthase 2 (SAM2) of Hordeum vulgare (Barley).